Here is a 137-residue protein sequence, read N- to C-terminus: Gonadotropin subunit beta-2 (137 aa).

An N-terminal signal peptide occupies residues 1–24 (MLPFMLSSFLGASPSIWPLAPAEA). Cystine bridges form between C30–C76, C44–C91, C47–C129, C55–C107, C59–C109, and C112–C119. N34 is a glycosylation site (N-linked (GlcNAc...) asparagine).

It belongs to the glycoprotein hormones subunit beta family. As to quaternary structure, heterodimer of an alpha and a beta chain.

The protein resides in the secreted. Its function is as follows. Involved in gametogenesis and steroidogenesis. The polypeptide is Gonadotropin subunit beta-2 (cgbb) (Acanthopagrus latus (Yellowfin seabream)).